The chain runs to 65 residues: UPF0434 protein CC_0108 (65 aa).

The protein belongs to the UPF0434 family.

The protein is UPF0434 protein CC_0108 of Caulobacter vibrioides (strain ATCC 19089 / CIP 103742 / CB 15) (Caulobacter crescentus).